Consider the following 156-residue polypeptide: MASYFDEHNCEPTVPEEQYRQNALLELARSLLSGMDIDLGALDFTEWDQRLPPPAAKKVVESLPKVTVTPEQADAALKCPVCLLEFEEGETVRQLPCEHLFHSSCILPWLGKTNSCPLCRHELPTDSPEYEEYKQEKERRQQKEHRLECLHDAMYT.

Residues 79–120 (CPVCLLEFEEGETVRQLPCEHLFHSSCILPWLGKTNSCPLCR) form an RING-type; atypical zinc finger.

Belongs to the RNF181 family.

The catalysed reaction is S-ubiquitinyl-[E2 ubiquitin-conjugating enzyme]-L-cysteine + [acceptor protein]-L-lysine = [E2 ubiquitin-conjugating enzyme]-L-cysteine + N(6)-ubiquitinyl-[acceptor protein]-L-lysine.. The protein operates within protein modification; protein ubiquitination. Its function is as follows. E3 ubiquitin-protein ligase which accepts ubiquitin from an E2 ubiquitin-conjugating enzyme in the form of a thioester and then directly transfers the ubiquitin to targeted substrates. Catalyzes monoubiquitination of 26S proteasome subunit PSMC2/RPT1. This chain is E3 ubiquitin-protein ligase RNF181 (rnf181), found in Xenopus tropicalis (Western clawed frog).